The following is a 429-amino-acid chain: Phosphoribosylamine--glycine ligase (429 aa).

Residues 109–316 enclose the ATP-grasp domain; it reads KDFLARHKIP…LVELCLAACE (208 aa). 135-196 contacts ATP; the sequence is LREKGAPIVI…EEFLDGEEAS (62 aa). The tract at residues 212 to 236 is disordered; it reads SQDHKRVGDKDTGPNTGGMGAYSPA. Positions 213 to 223 are enriched in basic and acidic residues; it reads QDHKRVGDKDT. Residues Glu-286 and Asn-288 each contribute to the Mg(2+) site.

Belongs to the GARS family. As to quaternary structure, monomer. It depends on Mg(2+) as a cofactor. Requires Mn(2+) as cofactor.

It catalyses the reaction 5-phospho-beta-D-ribosylamine + glycine + ATP = N(1)-(5-phospho-beta-D-ribosyl)glycinamide + ADP + phosphate + H(+). It functions in the pathway purine metabolism; IMP biosynthesis via de novo pathway; N(1)-(5-phospho-D-ribosyl)glycinamide from 5-phospho-alpha-D-ribose 1-diphosphate: step 2/2. In terms of biological role, catalyzes the reversible conversion of phosphoribosylamine to glycinamide ribonucleotide, an enzymatic step in purine biosynthesis pathway. This Escherichia coli (strain K12) protein is Phosphoribosylamine--glycine ligase (purD).